We begin with the raw amino-acid sequence, 476 residues long: Aspartyl/glutamyl-tRNA(Asn/Gln) amidotransferase subunit B (476 aa).

It belongs to the GatB/GatE family. GatB subfamily. In terms of assembly, heterotrimer of A, B and C subunits.

The catalysed reaction is L-glutamyl-tRNA(Gln) + L-glutamine + ATP + H2O = L-glutaminyl-tRNA(Gln) + L-glutamate + ADP + phosphate + H(+). The enzyme catalyses L-aspartyl-tRNA(Asn) + L-glutamine + ATP + H2O = L-asparaginyl-tRNA(Asn) + L-glutamate + ADP + phosphate + 2 H(+). Functionally, allows the formation of correctly charged Asn-tRNA(Asn) or Gln-tRNA(Gln) through the transamidation of misacylated Asp-tRNA(Asn) or Glu-tRNA(Gln) in organisms which lack either or both of asparaginyl-tRNA or glutaminyl-tRNA synthetases. The reaction takes place in the presence of glutamine and ATP through an activated phospho-Asp-tRNA(Asn) or phospho-Glu-tRNA(Gln). The protein is Aspartyl/glutamyl-tRNA(Asn/Gln) amidotransferase subunit B of Listeria monocytogenes serovar 1/2a (strain ATCC BAA-679 / EGD-e).